The chain runs to 113 residues: Small ribosomal subunit protein uS17 (113 aa).

It belongs to the universal ribosomal protein uS17 family. As to quaternary structure, part of the 30S ribosomal subunit.

Functionally, one of the primary rRNA binding proteins, it binds specifically to the 5'-end of 16S ribosomal RNA. The chain is Small ribosomal subunit protein uS17 from Pyrococcus abyssi (strain GE5 / Orsay).